Here is a 239-residue protein sequence, read N- to C-terminus: MKVTLFVTCLVDMFETNVGKATVEVLERLGCEIEFPEAQVCCGQPAYNSGHVEAAKEAMKHMIETFEDAEYIVTPSGSCATMFHEYPHVFKDDPKWAKRAQKVADKTYEFTQFIVDVLKVTDVGASLPGIATIHKSCHMTRMLGVTEAPGILLSNVKGLTVRELPNVQNCCGFGGTFSVKMTPISEQMVDEKVDSAMETGADYLIGADCGCLLNIGGRIERLGKEIKVMHIAEVLNSRS.

The protein belongs to the LutA/YkgE family.

Its function is as follows. Is involved in L-lactate degradation and allows cells to grow with lactate as the sole carbon source. This chain is Lactate utilization protein A 1, found in Bacillus anthracis (strain A0248).